The following is a 121-amino-acid chain: MTQSTEDTLLRLAAVIDSRKGGDPDQSYVSRLFHKGDDAVLKKIGEEATEVVLAAKDVRQGGAPTALVGEVADLWFHCLVMLSHFDLSPADVIGELERREGLSGIEEKALRKRREREENGG.

This sequence belongs to the PRA-PH family.

It is found in the cytoplasm. The catalysed reaction is 1-(5-phospho-beta-D-ribosyl)-ATP + H2O = 1-(5-phospho-beta-D-ribosyl)-5'-AMP + diphosphate + H(+). The protein operates within amino-acid biosynthesis; L-histidine biosynthesis; L-histidine from 5-phospho-alpha-D-ribose 1-diphosphate: step 2/9. The chain is Phosphoribosyl-ATP pyrophosphatase from Burkholderia ambifaria (strain MC40-6).